Consider the following 303-residue polypeptide: D-alanine--D-alanine ligase (303 aa).

Residues 99–293 enclose the ATP-grasp domain; the sequence is TYRFLKDIVE…FEELVEIILK (195 aa). 125-176 contributes to the ATP binding site; it reads GYPCVVKPRREGSSIGVFICESDEEFQHALKEDLPRYGSVIVQKYIPGREMT. The Mg(2+) site is built by aspartate 248, glutamate 260, and asparagine 262.

The protein belongs to the D-alanine--D-alanine ligase family. Mg(2+) is required as a cofactor. It depends on Mn(2+) as a cofactor.

The protein resides in the cytoplasm. It catalyses the reaction 2 D-alanine + ATP = D-alanyl-D-alanine + ADP + phosphate + H(+). Its pathway is cell wall biogenesis; peptidoglycan biosynthesis. Functionally, cell wall formation. This is D-alanine--D-alanine ligase from Thermotoga petrophila (strain ATCC BAA-488 / DSM 13995 / JCM 10881 / RKU-1).